Here is a 203-residue protein sequence, read N- to C-terminus: Large ribosomal subunit protein bL25 (203 aa).

It belongs to the bacterial ribosomal protein bL25 family. CTC subfamily. In terms of assembly, part of the 50S ribosomal subunit; part of the 5S rRNA/L5/L18/L25 subcomplex. Contacts the 5S rRNA. Binds to the 5S rRNA independently of L5 and L18.

This is one of the proteins that binds to the 5S RNA in the ribosome where it forms part of the central protuberance. This chain is Large ribosomal subunit protein bL25, found in Xanthobacter autotrophicus (strain ATCC BAA-1158 / Py2).